The chain runs to 172 residues: NAD(P)H-quinone oxidoreductase subunit I, chloroplastic (172 aa).

2 consecutive 4Fe-4S ferredoxin-type domains span residues 55–84 and 95–124; these read GRIH…VDWK and LNYS…MTEE. [4Fe-4S] cluster contacts are provided by C64, C67, C70, C74, C104, C107, C110, and C114.

The protein belongs to the complex I 23 kDa subunit family. In terms of assembly, NDH is composed of at least 16 different subunits, 5 of which are encoded in the nucleus. The cofactor is [4Fe-4S] cluster.

The protein resides in the plastid. The protein localises to the chloroplast thylakoid membrane. It carries out the reaction a plastoquinone + NADH + (n+1) H(+)(in) = a plastoquinol + NAD(+) + n H(+)(out). The catalysed reaction is a plastoquinone + NADPH + (n+1) H(+)(in) = a plastoquinol + NADP(+) + n H(+)(out). NDH shuttles electrons from NAD(P)H:plastoquinone, via FMN and iron-sulfur (Fe-S) centers, to quinones in the photosynthetic chain and possibly in a chloroplast respiratory chain. The immediate electron acceptor for the enzyme in this species is believed to be plastoquinone. Couples the redox reaction to proton translocation, and thus conserves the redox energy in a proton gradient. The chain is NAD(P)H-quinone oxidoreductase subunit I, chloroplastic from Capsella bursa-pastoris (Shepherd's purse).